Consider the following 565-residue polypeptide: DNA repair protein RAD7 (565 aa).

Disordered stretches follow at residues M1–A22 and W41–E68. The tract at residues M1–D200 is hydrophilic. Residues K47 to D62 are compositionally biased toward basic and acidic residues. A phosphoserine mark is found at S64 and S85. The tract at residues A105–R137 is disordered. Over residues S115–A127 the composition is skewed to polar residues.

To S.pombe SpCC613.14. As to quaternary structure, component of the global genome repair (GGR) complex composed of at least ABF1, RAD7 and RAD16. Interacts with ELC1.

Its function is as follows. Component of the global genome repair (GGR) complex which promotes global genome nucleotide excision repair (GG-NER) which removes DNA damage from nontranscribing DNA. This protein is one of 10 proteins (RAD1, 2,3,4,7,10,14, 16,23 and MMS19) involved in excision repair of DNA damaged with UV light, bulky adducts, or cross-linking agents. This is DNA repair protein RAD7 (RAD7) from Saccharomyces cerevisiae (strain ATCC 204508 / S288c) (Baker's yeast).